Consider the following 296-residue polypeptide: Fructose-bisphosphate aldolase class 1 (296 aa).

The active-site Proton acceptor is the glutamate 175. Lysine 212 (schiff-base intermediate with dihydroxyacetone-P) is an active-site residue.

Belongs to the class I fructose-bisphosphate aldolase family.

It carries out the reaction beta-D-fructose 1,6-bisphosphate = D-glyceraldehyde 3-phosphate + dihydroxyacetone phosphate. The protein operates within carbohydrate degradation; glycolysis; D-glyceraldehyde 3-phosphate and glycerone phosphate from D-glucose: step 4/4. The sequence is that of Fructose-bisphosphate aldolase class 1 from Staphylococcus aureus (strain MRSA252).